A 226-amino-acid polypeptide reads, in one-letter code: Thiamine-phosphate synthase (226 aa).

Residues 46–50 (QFRDK) and Asp-83 each bind 4-amino-2-methyl-5-(diphosphooxymethyl)pyrimidine. Asp-84 and Asp-103 together coordinate Mg(2+). Ser-122 contributes to the 4-amino-2-methyl-5-(diphosphooxymethyl)pyrimidine binding site. Position 149-151 (149-151 (TQS)) interacts with 2-[(2R,5Z)-2-carboxy-4-methylthiazol-5(2H)-ylidene]ethyl phosphate. A 4-amino-2-methyl-5-(diphosphooxymethyl)pyrimidine-binding site is contributed by Lys-152. Residues Gly-181 and 201-202 (IT) contribute to the 2-[(2R,5Z)-2-carboxy-4-methylthiazol-5(2H)-ylidene]ethyl phosphate site.

Belongs to the thiamine-phosphate synthase family. Mg(2+) is required as a cofactor.

The catalysed reaction is 2-[(2R,5Z)-2-carboxy-4-methylthiazol-5(2H)-ylidene]ethyl phosphate + 4-amino-2-methyl-5-(diphosphooxymethyl)pyrimidine + 2 H(+) = thiamine phosphate + CO2 + diphosphate. The enzyme catalyses 2-(2-carboxy-4-methylthiazol-5-yl)ethyl phosphate + 4-amino-2-methyl-5-(diphosphooxymethyl)pyrimidine + 2 H(+) = thiamine phosphate + CO2 + diphosphate. It carries out the reaction 4-methyl-5-(2-phosphooxyethyl)-thiazole + 4-amino-2-methyl-5-(diphosphooxymethyl)pyrimidine + H(+) = thiamine phosphate + diphosphate. The protein operates within cofactor biosynthesis; thiamine diphosphate biosynthesis; thiamine phosphate from 4-amino-2-methyl-5-diphosphomethylpyrimidine and 4-methyl-5-(2-phosphoethyl)-thiazole: step 1/1. Condenses 4-methyl-5-(beta-hydroxyethyl)thiazole monophosphate (THZ-P) and 2-methyl-4-amino-5-hydroxymethyl pyrimidine pyrophosphate (HMP-PP) to form thiamine monophosphate (TMP). This is Thiamine-phosphate synthase from Haemophilus influenzae (strain 86-028NP).